We begin with the raw amino-acid sequence, 432 residues long: 5'-deoxyadenosine deaminase (432 aa).

Zn(2+) contacts are provided by histidine 63 and histidine 65. Positions 92 and 184 each coordinate substrate. Residue histidine 211 participates in Zn(2+) binding. Substrate-binding residues include glutamate 214 and aspartate 299. Residue aspartate 299 participates in Zn(2+) binding.

It belongs to the metallo-dependent hydrolases superfamily. MTA/SAH deaminase family. Homotetramer. It depends on Zn(2+) as a cofactor.

The catalysed reaction is 5'-deoxyadenosine + H2O + H(+) = 5'-deoxyinosine + NH4(+). It catalyses the reaction S-adenosyl-L-homocysteine + H2O + H(+) = S-inosyl-L-homocysteine + NH4(+). It carries out the reaction S-methyl-5'-thioadenosine + H2O + H(+) = S-methyl-5'-thioinosine + NH4(+). The enzyme catalyses adenosine + H2O + H(+) = inosine + NH4(+). It participates in amino-acid biosynthesis; S-adenosyl-L-methionine biosynthesis. Catalyzes the deamination of three SAM-derived enzymatic products, namely 5'-deoxyadenosine, S-adenosyl-L-homocysteine, and 5'-methylthioadenosine, to produce the inosine analogs. Can also deaminate adenosine. The preferred substrate for this enzyme is 5'-deoxyadenosine, but all these substrates are efficiently deaminated. Likely functions in a S-adenosyl-L-methionine (SAM) recycling pathway from S-adenosyl-L-homocysteine (SAH) produced from SAM-dependent methylation reactions. May also be involved in the recycling of 5'-deoxyadenosine, whereupon the 5'-deoxyribose moiety of 5'-deoxyinosine is further metabolized to deoxyhexoses used for the biosynthesis of aromatic amino acids in methanogens. This is 5'-deoxyadenosine deaminase from Methanosarcina mazei (strain ATCC BAA-159 / DSM 3647 / Goe1 / Go1 / JCM 11833 / OCM 88) (Methanosarcina frisia).